We begin with the raw amino-acid sequence, 350 residues long: S-adenosylmethionine:tRNA ribosyltransferase-isomerase (350 aa).

Belongs to the QueA family. In terms of assembly, monomer.

Its subcellular location is the cytoplasm. It catalyses the reaction 7-aminomethyl-7-carbaguanosine(34) in tRNA + S-adenosyl-L-methionine = epoxyqueuosine(34) in tRNA + adenine + L-methionine + 2 H(+). The protein operates within tRNA modification; tRNA-queuosine biosynthesis. In terms of biological role, transfers and isomerizes the ribose moiety from AdoMet to the 7-aminomethyl group of 7-deazaguanine (preQ1-tRNA) to give epoxyqueuosine (oQ-tRNA). The polypeptide is S-adenosylmethionine:tRNA ribosyltransferase-isomerase (Aliivibrio fischeri (strain MJ11) (Vibrio fischeri)).